The sequence spans 570 residues: Urease subunit alpha (570 aa).

The Urease domain maps to 131 to 570 (GGIDSHIHFI…LPMTQRYFLF (440 aa)). The Ni(2+) site is built by His-136, His-138, and Lys-219. Position 219 is an N6-carboxylysine (Lys-219). Substrate is bound at residue His-221. The Ni(2+) site is built by His-248 and His-274. His-322 (proton donor) is an active-site residue. Ni(2+) is bound at residue Asp-362.

Belongs to the metallo-dependent hydrolases superfamily. Urease alpha subunit family. In terms of assembly, heterotrimer of UreA (gamma), UreB (beta) and UreC (alpha) subunits. Three heterotrimers associate to form the active enzyme. It depends on Ni cation as a cofactor. Post-translationally, carboxylation allows a single lysine to coordinate two nickel ions.

It localises to the cytoplasm. It carries out the reaction urea + 2 H2O + H(+) = hydrogencarbonate + 2 NH4(+). It participates in nitrogen metabolism; urea degradation; CO(2) and NH(3) from urea (urease route): step 1/1. The protein is Urease subunit alpha of Trichodesmium erythraeum (strain IMS101).